Consider the following 220-residue polypeptide: Guanylate kinase (220 aa).

The Guanylate kinase-like domain occupies 14–194; that stretch reads GLMVVISSPS…SYAAIKSIIN (181 aa). 21–28 lines the ATP pocket; the sequence is SPSGAGKS.

Belongs to the guanylate kinase family.

The protein localises to the cytoplasm. It catalyses the reaction GMP + ATP = GDP + ADP. Essential for recycling GMP and indirectly, cGMP. This Brucella abortus (strain 2308) protein is Guanylate kinase.